The sequence spans 209 residues: Response regulator protein VraR (209 aa).

In terms of domain architecture, Response regulatory spans 4 to 120 (KVLFVDDHEM…DIAEAIRKTY (117 aa)). Asp-55 carries the post-translational modification 4-aspartylphosphate. Positions 141-206 (RAELYEMLTE…QAVIYAFQHN (66 aa)) constitute an HTH luxR-type domain. A DNA-binding region (H-T-H motif) is located at residues 165 to 184 (NQEIASASHITIKTVKTHVS).

Phosphorylated by VraS.

The protein resides in the cytoplasm. Functionally, member of the two-component regulatory system VraS/VraR involved in the control of the cell wall peptidoglycan biosynthesis. The chain is Response regulator protein VraR (vraR) from Staphylococcus saprophyticus subsp. saprophyticus (strain ATCC 15305 / DSM 20229 / NCIMB 8711 / NCTC 7292 / S-41).